A 234-amino-acid chain; its full sequence is Putative N-acetylmannosamine-6-phosphate 2-epimerase (234 aa).

Belongs to the NanE family.

The catalysed reaction is an N-acyl-D-glucosamine 6-phosphate = an N-acyl-D-mannosamine 6-phosphate. It participates in amino-sugar metabolism; N-acetylneuraminate degradation; D-fructose 6-phosphate from N-acetylneuraminate: step 3/5. Its function is as follows. Converts N-acetylmannosamine-6-phosphate (ManNAc-6-P) to N-acetylglucosamine-6-phosphate (GlcNAc-6-P). This is Putative N-acetylmannosamine-6-phosphate 2-epimerase from Klebsiella pneumoniae subsp. pneumoniae (strain ATCC 700721 / MGH 78578).